Consider the following 513-residue polypeptide: GMP synthase [glutamine-hydrolyzing] (513 aa).

The region spanning 7–197 (TILVLDFGGQ…LFGVCGCTGE (191 aa)) is the Glutamine amidotransferase type-1 domain. Catalysis depends on Cys84, which acts as the Nucleophile. Active-site residues include His171 and Glu173. In terms of domain architecture, GMPS ATP-PPase spans 198-387 (WTMENFIEEQ…LGLPEDIVWR (190 aa)). 225–231 (SGGVDSS) contacts ATP.

As to quaternary structure, homodimer.

The catalysed reaction is XMP + L-glutamine + ATP + H2O = GMP + L-glutamate + AMP + diphosphate + 2 H(+). It functions in the pathway purine metabolism; GMP biosynthesis; GMP from XMP (L-Gln route): step 1/1. Its function is as follows. Catalyzes the synthesis of GMP from XMP. The polypeptide is GMP synthase [glutamine-hydrolyzing] (Heliobacterium modesticaldum (strain ATCC 51547 / Ice1)).